The following is a 183-amino-acid chain: UPF0397 protein VSAL_I1988 (183 aa).

5 consecutive transmembrane segments (helical) span residues 8 to 28 (VVVI…MFGI), 41 to 61 (AVLA…VGFI), 74 to 94 (VWLT…LFPI), 110 to 130 (FFIF…TSAF), and 147 to 167 (LCII…FILT).

This sequence belongs to the UPF0397 family.

It localises to the cell membrane. The chain is UPF0397 protein VSAL_I1988 from Aliivibrio salmonicida (strain LFI1238) (Vibrio salmonicida (strain LFI1238)).